The sequence spans 92 residues: Small ribosomal subunit protein uS19 (92 aa).

This sequence belongs to the universal ribosomal protein uS19 family.

Protein S19 forms a complex with S13 that binds strongly to the 16S ribosomal RNA. This is Small ribosomal subunit protein uS19 from Paracoccus denitrificans (strain Pd 1222).